Consider the following 109-residue polypeptide: SIAFSRAVFSEFLATLLFVFFGLGSALNWPQALPSVLQIAMAFGLAIGTLVQTLGHISGAHINPAVTVACLVGCHVSFLRATFYLAAQLLGAVAGAALLHELTPPDIRG.

At Ser1 to Arg6 the chain is on the cytoplasmic side. A helical transmembrane segment spans residues Ala7–Leu27. At Asn28–Ser35 the chain is on the extracellular side. The helical transmembrane segment at Val36 to Leu54 threads the bilayer. Over Gly55–Gly59 the chain is Cytoplasmic. The segment at residues Ala60–Ala69 is an intramembrane region (discontinuously helical). Positions Asn63–Ala65 match the NPA 1 motif. Topologically, residues Cys70–Arg80 are cytoplasmic. The chain crosses the membrane as a helical span at residues Ala81–Leu102. The Extracellular portion of the chain corresponds to Thr103–Gly109.

Belongs to the MIP/aquaporin (TC 1.A.8) family. As to quaternary structure, homotetramer. Serine phosphorylation is necessary and sufficient for expression at the apical membrane. Endocytosis is not phosphorylation-dependent. Post-translationally, N-glycosylated.

The protein resides in the apical cell membrane. It localises to the basolateral cell membrane. Its subcellular location is the cell membrane. It is found in the cytoplasmic vesicle membrane. The protein localises to the golgi apparatus. The protein resides in the trans-Golgi network membrane. The catalysed reaction is H2O(in) = H2O(out). The enzyme catalyses glycerol(in) = glycerol(out). In terms of biological role, forms a water-specific channel that provides the plasma membranes of renal collecting duct with high permeability to water, thereby permitting water to move in the direction of an osmotic gradient. Plays an essential role in renal water homeostasis. Could also be permeable to glycerol. This is Aquaporin-2 from Elephas maximus (Indian elephant).